The chain runs to 418 residues: UDP-N-acetylglucosamine 1-carboxyvinyltransferase (418 aa).

Lys-22–Asn-23 contacts phosphoenolpyruvate. Arg-92 contacts UDP-N-acetyl-alpha-D-glucosamine. The active-site Proton donor is the Cys-116. Cys-116 bears the 2-(S-cysteinyl)pyruvic acid O-phosphothioketal mark. Residues Arg-121 to Leu-125, Asp-305, and Leu-327 each bind UDP-N-acetyl-alpha-D-glucosamine.

This sequence belongs to the EPSP synthase family. MurA subfamily.

It localises to the cytoplasm. The enzyme catalyses phosphoenolpyruvate + UDP-N-acetyl-alpha-D-glucosamine = UDP-N-acetyl-3-O-(1-carboxyvinyl)-alpha-D-glucosamine + phosphate. It functions in the pathway cell wall biogenesis; peptidoglycan biosynthesis. Its function is as follows. Cell wall formation. Adds enolpyruvyl to UDP-N-acetylglucosamine. The sequence is that of UDP-N-acetylglucosamine 1-carboxyvinyltransferase from Campylobacter lari (strain RM2100 / D67 / ATCC BAA-1060).